The following is a 540-amino-acid chain: Phenylalanine--tRNA ligase beta subunit (540 aa).

The B5 domain occupies 270 to 347 (MTPRTLNVPR…IGYGFDKIKS (78 aa)). Residues aspartate 325, aspartate 331, glutamate 334, and aspartate 335 each contribute to the Mg(2+) site.

The protein belongs to the phenylalanyl-tRNA synthetase beta subunit family. Type 2 subfamily. In terms of assembly, tetramer of two alpha and two beta subunits. The cofactor is Mg(2+).

It localises to the cytoplasm. The enzyme catalyses tRNA(Phe) + L-phenylalanine + ATP = L-phenylalanyl-tRNA(Phe) + AMP + diphosphate + H(+). This is Phenylalanine--tRNA ligase beta subunit from Methanococcoides burtonii (strain DSM 6242 / NBRC 107633 / OCM 468 / ACE-M).